A 146-amino-acid polypeptide reads, in one-letter code: Late protein H7 (146 aa).

Residues 10–32 (LAMTAFFGELNTLDIMALIMSIF) traverse the membrane as a helical segment.

This sequence belongs to the chordopoxvirinae H7 family.

The protein localises to the membrane. Contributes to the formation of crescents and immature virions (IV). In Vaccinia virus (strain Tian Tan) (VACV), this protein is Late protein H7.